A 235-amino-acid polypeptide reads, in one-letter code: Uridylate kinase (235 aa).

12 to 15 serves as a coordination point for ATP; that stretch reads KISG. Residue G54 participates in UMP binding. The ATP site is built by G55 and R59. UMP-binding positions include D72 and 133–140; that span reads TGNPFFST. Residues Y166 and D169 each coordinate ATP.

It belongs to the UMP kinase family. Homohexamer.

The protein resides in the cytoplasm. The catalysed reaction is UMP + ATP = UDP + ADP. It participates in pyrimidine metabolism; CTP biosynthesis via de novo pathway; UDP from UMP (UMPK route): step 1/1. Its activity is regulated as follows. Inhibited by UTP. Its function is as follows. Catalyzes the reversible phosphorylation of UMP to UDP. This Acetivibrio thermocellus (strain ATCC 27405 / DSM 1237 / JCM 9322 / NBRC 103400 / NCIMB 10682 / NRRL B-4536 / VPI 7372) (Clostridium thermocellum) protein is Uridylate kinase.